Reading from the N-terminus, the 381-residue chain is MAPGEKESGEGPAKSALRKIRTATLVISLARGWQQWANENSIRQAQEPTGWLPGGTQDSPQAPKPITPPTSHQKAQSAPKSPPRLPEGHGDGQSSEKAPEVSHIKKKEVSKTVVSKTYERGGDVSHLSHRYERDAGVLEPGQPENDIDRILHSHGSPTRRRKCANLVSELTKGWRVMEQEEPTWRSDSVDTEDSGYGGEAEERPEQDGVQVAVVRIKRPLPSQVNRFTEKLNCKAQQKYSPVGNLKGRWQQWADEHIQSQKLNPFSEEFDYELAMSTRLHKGDEGYGRPKEGTKTAERAKRAEEHIYREMMDMCFIICTMARHRRDGKIQVTFGDLFDRYVRISDKVVGILMRARKHGLVDFEGEMLWQGRDDHVVITLLK.

2 disordered regions span residues 39–156 and 179–207; these read ENSI…SHGS and QEEP…PEQD. A compositionally biased stretch (polar residues) spans 69–79; the sequence is PTSHQKAQSAP. Residues 97 to 110 are compositionally biased toward basic and acidic residues; that stretch reads KAPEVSHIKKKEVS. 2 positions are modified to phosphoserine: serine 156 and serine 188. The segment covering 179–188 has biased composition (basic and acidic residues); it reads QEEPTWRSDS. 2 actin-binding regions span residues 199–299 and 300–381; these read EAEE…AERA and KRAE…TLLK. 2 interaction with actin regions span residues 240-285 and 352-381; these read SPVG…GDEG and MRAR…TLLK.

In terms of assembly, binds F-actin and ABLIM1, ABLIM2 and ABLIM3. Interaction with ABLIM2 and ABLIM3 enhances activity.

The protein resides in the cytoplasm. It localises to the myofibril. Its subcellular location is the sarcomere. The protein localises to the cytoskeleton. Acts as an activator of serum response factor (SRF)-dependent transcription possibly by inducing nuclear translocation of MKL1 or MKL2 and through a mechanism requiring Rho-actin signaling. The protein is Actin-binding Rho-activating protein of Homo sapiens (Human).